The primary structure comprises 331 residues: Ketol-acid reductoisomerase (NADP(+)) (331 aa).

In terms of domain architecture, KARI N-terminal Rossmann spans 1-181 (MKVYYEKDAN…GGSRSGVIET (181 aa)). NADP(+) contacts are provided by residues 24–27 (YGSQ), R47, and 82–85 (DQVQ). Residue H107 is part of the active site. Residue G133 participates in NADP(+) binding. The 146-residue stretch at 182–327 (TFREETETDL…GELRGMMPWL (146 aa)) folds into the KARI C-terminal knotted domain. 4 residues coordinate Mg(2+): D190, E194, E226, and E230. S251 lines the substrate pocket.

This sequence belongs to the ketol-acid reductoisomerase family. The cofactor is Mg(2+).

It carries out the reaction (2R)-2,3-dihydroxy-3-methylbutanoate + NADP(+) = (2S)-2-acetolactate + NADPH + H(+). The catalysed reaction is (2R,3R)-2,3-dihydroxy-3-methylpentanoate + NADP(+) = (S)-2-ethyl-2-hydroxy-3-oxobutanoate + NADPH + H(+). It participates in amino-acid biosynthesis; L-isoleucine biosynthesis; L-isoleucine from 2-oxobutanoate: step 2/4. Its pathway is amino-acid biosynthesis; L-valine biosynthesis; L-valine from pyruvate: step 2/4. In terms of biological role, involved in the biosynthesis of branched-chain amino acids (BCAA). Catalyzes an alkyl-migration followed by a ketol-acid reduction of (S)-2-acetolactate (S2AL) to yield (R)-2,3-dihydroxy-isovalerate. In the isomerase reaction, S2AL is rearranged via a Mg-dependent methyl migration to produce 3-hydroxy-3-methyl-2-ketobutyrate (HMKB). In the reductase reaction, this 2-ketoacid undergoes a metal-dependent reduction by NADPH to yield (R)-2,3-dihydroxy-isovalerate. This is Ketol-acid reductoisomerase (NADP(+)) from Nitratidesulfovibrio vulgaris (strain ATCC 29579 / DSM 644 / CCUG 34227 / NCIMB 8303 / VKM B-1760 / Hildenborough) (Desulfovibrio vulgaris).